The sequence spans 654 residues: Meiotically up-regulated gene 24 protein (654 aa).

Positions 299 to 355 (RNVFIGNLPSSYHEKEIEEAFGKFGKIEHIKILSKKNIAFVHFLNIRDAIKVVRTLS) constitute an RRM 1 domain. The interval 383–404 (SCFTSKQNPDTTSDRCRQQESK) is disordered. Residues 384–393 (CFTSKQNPDT) show a composition bias toward polar residues. The segment covering 394-404 (TSDRCRQQESK) has biased composition (basic and acidic residues). 2 consecutive RRM domains span residues 409-482 (RTVF…WGKE) and 500-571 (RNVY…YAPD).

The protein resides in the cytoplasm. Has a role in meiosis. The chain is Meiotically up-regulated gene 24 protein (mug24) from Schizosaccharomyces pombe (strain 972 / ATCC 24843) (Fission yeast).